A 273-amino-acid polypeptide reads, in one-letter code: Kit ligand (273 aa).

Positions 1-25 are cleaved as a signal peptide; that stretch reads MKKTQTWILTCIYLQLLLFNPLVKT. The Extracellular segment spans residues 26-214; sequence EGICRNRVTN…KNPPGDSSLH (189 aa). Cystine bridges form between cysteine 29–cysteine 114 and cysteine 68–cysteine 163. N-linked (GlcNAc...) asparagine; partial glycosylation is found at asparagine 90 and asparagine 118. An N-linked (GlcNAc...) asparagine glycan is attached at asparagine 145. Serine 167 carries O-linked (GalNAc...) serine glycosylation. Residues threonine 168 and threonine 180 are each glycosylated (O-linked (GalNAc...) threonine). Asparagine 195 carries N-linked (GlcNAc...) asparagine glycosylation. Residues 215-237 form a helical membrane-spanning segment; the sequence is WAAMALPALFSLIIGFAFGALYW. The Cytoplasmic portion of the chain corresponds to 238–273; it reads KKRQPSLTRAVENIQINEEDNEISMLQEKEREFQEV.

The protein belongs to the SCF family. In terms of assembly, homodimer, non-covalently linked. Heterotetramer with KIT, binding two KIT molecules; thereby mediates KIT dimerization and subsequent activation by autophosphorylation. Post-translationally, a soluble form (sKITLG) is produced by proteolytic processing of isoform 1 in the extracellular domain. Found in two differentially glycosylated forms, LMW-SCF and HMW-SCF. LMW-SCF is fully N-glycosylated at Asn-145, partially N-glycosylated at Asn-90, O-glycosylated at Ser-167, Thr-168 and Thr-180, and not glycosylated at Asn-97 or Asn-118. HMW-SCF is N-glycosylated at Asn-118, Asn-90 and Asn-145, O-glycosylated at Ser-167, Thr-168 and Thr-180, and not glycosylated at Asn-97. In terms of processing, a soluble form exists as a cleavage product of the extracellular domain.

Its subcellular location is the cell membrane. The protein localises to the cytoplasm. The protein resides in the cytoskeleton. It localises to the cell projection. It is found in the lamellipodium. Its subcellular location is the filopodium. The protein localises to the secreted. In terms of biological role, ligand for the receptor-type protein-tyrosine kinase KIT. Plays an essential role in the regulation of cell survival and proliferation, hematopoiesis, stem cell maintenance, gametogenesis, mast cell development, migration and function, and in melanogenesis. KITLG/SCF binding can activate several signaling pathways. Promotes phosphorylation of PIK3R1, the regulatory subunit of phosphatidylinositol 3-kinase, and subsequent activation of the kinase AKT1. KITLG/SCF and KIT also transmit signals via GRB2 and activation of RAS, RAF1 and the MAP kinases MAPK1/ERK2 and/or MAPK3/ERK1. KITLG/SCF and KIT promote activation of STAT family members STAT1, STAT3 and STAT5. KITLG/SCF and KIT promote activation of PLCG1, leading to the production of the cellular signaling molecules diacylglycerol and inositol 1,4,5-trisphosphate. KITLG/SCF acts synergistically with other cytokines, probably interleukins. This chain is Kit ligand, found in Homo sapiens (Human).